The primary structure comprises 192 residues: Ion-translocating oxidoreductase complex subunit B (192 aa).

A hydrophobic region spans residues 1–26 (MNAIWIAVAAVSLLGLAFGAILGYAS). The 4Fe-4S domain maps to 32-91 (EDDPVVEKIDEILPQSQCGQCGYPGCRPYAEAISCNGEKINRCAPGGEAVMLKIAELLNV). [4Fe-4S] cluster-binding residues include cysteine 49, cysteine 52, cysteine 57, cysteine 74, cysteine 117, cysteine 120, cysteine 123, cysteine 127, cysteine 147, cysteine 150, cysteine 153, and cysteine 157. 4Fe-4S ferredoxin-type domains are found at residues 108 to 137 (MVAV…GATR) and 138 to 167 (AMHT…LQPV).

It belongs to the 4Fe4S bacterial-type ferredoxin family. RnfB subfamily. In terms of assembly, the complex is composed of six subunits: RsxA, RsxB, RsxC, RsxD, RsxE and RsxG. [4Fe-4S] cluster serves as cofactor.

The protein resides in the cell inner membrane. Part of a membrane-bound complex that couples electron transfer with translocation of ions across the membrane. Required to maintain the reduced state of SoxR. The protein is Ion-translocating oxidoreductase complex subunit B of Escherichia coli O127:H6 (strain E2348/69 / EPEC).